The primary structure comprises 495 residues: Putative aldehyde dehydrogenase AldA (495 aa).

212–218 is an NAD(+) binding site; sequence GKGSESG. Catalysis depends on residues Glu256 and Cys290.

Belongs to the aldehyde dehydrogenase family.

The catalysed reaction is an aldehyde + NAD(+) + H2O = a carboxylate + NADH + 2 H(+). In Staphylococcus aureus (strain USA300), this protein is Putative aldehyde dehydrogenase AldA (aldA).